The primary structure comprises 544 residues: Epidermal growth factor-like protein 6 (544 aa).

The N-terminal stretch at 1–30 (MAITGGMQSSDMVLLLWITVICACCSFVDS) is a signal peptide. Positions 63–98 (RKGQCEAVCEQGCKHGECVGPNKCKCFPGFTGKNCN) constitute an EGF-like 1 domain. Disulfide bonds link Cys67/Cys80, Cys71/Cys86, Cys88/Cys97, Cys104/Cys115, Cys111/Cys124, and Cys126/Cys138. One can recognise an EGF-like 2; calcium-binding domain in the interval 100–139 (DLNECGLKPRPCEHRCMNTHGSYKCYCLNGYMLMPDGSCS). The region spanning 144–178 (CAMANCQYGCEQVKGDIRCLCPSGGLQLGPDGRTC) is the EGF-like 3 domain. In terms of domain architecture, EGF-like 4; calcium-binding spans 180 to 218 (DIDECAVGKASCPINRRCVNTFGSYYCKCQIGYELKYVN). Cystine bridges form between Cys184–Cys197, Cys191–Cys206, Cys229–Cys242, Cys236–Cys251, and Cys253–Cys264. One can recognise an EGF-like 5; calcium-binding domain in the interval 225 to 265 (DINECLLNTHKCSINADCLNTQGSFKCRCKHGFKGNGQECS). The disordered stretch occupies residues 332–357 (GNDNDEEEGEIEEEEEEELDEEDEEN). A coiled-coil region spans residues 333–367 (NDNDEEEGEIEEEEEEELDEEDEENVIEEEKLLRG). The segment covering 334–357 (DNDEEEGEIEEEEEEELDEEDEEN) has biased composition (acidic residues). Residues 399–543 (VDCRFDQGTC…VFLSSGPCSD (145 aa)) form the MAM domain.

Belongs to the nephronectin family.

Its subcellular location is the secreted. The protein resides in the extracellular space. The protein localises to the extracellular matrix. It localises to the basement membrane. Its function is as follows. May play a role in organ morphogenesis. Promotes matrix assembly. In Xenopus laevis (African clawed frog), this protein is Epidermal growth factor-like protein 6 (egfl6).